We begin with the raw amino-acid sequence, 498 residues long: Glycerol kinase 1 (498 aa).

Threonine 12 contacts ADP. Positions 12, 13, and 14 each coordinate ATP. Threonine 12 is a binding site for sn-glycerol 3-phosphate. Arginine 16 provides a ligand contact to ADP. Positions 82, 83, 134, and 243 each coordinate sn-glycerol 3-phosphate. The glycerol site is built by arginine 82, glutamate 83, tyrosine 134, aspartate 243, and glutamine 244. ADP is bound by residues threonine 265 and glycine 308. Threonine 265, glycine 308, glutamine 312, and glycine 409 together coordinate ATP. The ADP site is built by glycine 409 and asparagine 413.

This sequence belongs to the FGGY kinase family. As to quaternary structure, homotetramer and homodimer (in equilibrium).

It carries out the reaction glycerol + ATP = sn-glycerol 3-phosphate + ADP + H(+). The protein operates within polyol metabolism; glycerol degradation via glycerol kinase pathway; sn-glycerol 3-phosphate from glycerol: step 1/1. Activated by phosphorylation and inhibited by fructose 1,6-bisphosphate (FBP). Functionally, key enzyme in the regulation of glycerol uptake and metabolism. Catalyzes the phosphorylation of glycerol to yield sn-glycerol 3-phosphate. This chain is Glycerol kinase 1, found in Clostridium tetani (strain Massachusetts / E88).